The following is a 40-amino-acid chain: MADTTGRIPLWLIGTVTGILVIGLIGFFFYGSYSGLGSSL.

Residues 8–28 (IPLWLIGTVTGILVIGLIGFF) form a helical membrane-spanning segment.

It belongs to the PsbJ family. PSII is composed of 1 copy each of membrane proteins PsbA, PsbB, PsbC, PsbD, PsbE, PsbF, PsbH, PsbI, PsbJ, PsbK, PsbL, PsbM, PsbT, PsbX, PsbY, PsbZ, Psb30/Ycf12, at least 3 peripheral proteins of the oxygen-evolving complex and a large number of cofactors. It forms dimeric complexes.

Its subcellular location is the plastid. It is found in the chloroplast thylakoid membrane. In terms of biological role, one of the components of the core complex of photosystem II (PSII). PSII is a light-driven water:plastoquinone oxidoreductase that uses light energy to abstract electrons from H(2)O, generating O(2) and a proton gradient subsequently used for ATP formation. It consists of a core antenna complex that captures photons, and an electron transfer chain that converts photonic excitation into a charge separation. The polypeptide is Photosystem II reaction center protein J (Zea mays (Maize)).